The sequence spans 286 residues: MNLKRKWDVYSRLTRIDRPIGTLLLLWPCLMALMLAAGGMPDLKVLVIFIIGVVIMRACGCIINDYADRDLDSFVERTRSRPLASGEISTKEALILFVILGLSAFGLVLLLNGLVVKLSVVGIILTIIYPFTKRITNMPQMFLGIVWSWSIPMAYAAQTGEVPMEAWWLFAANWCWTVAYDTMYAMVDRDDDLKVGIKSTAILFGKYDRQIIGLFQLAALACFIAAGWSADRGLLYGLGILTFVGFSTYQQMLIFDRERAPCFKAFLNNNWAGLALFVGLGADYLI.

A run of 7 helical transmembrane segments spans residues 21-40 (GTLL…AGGM), 95-115 (ILFV…NGLV), 142-162 (FLGI…TGEV), 167-187 (WWLF…YAMV), 210-230 (QIIG…GWSA), 235-255 (LYGL…MLIF), and 266-286 (FLNN…DYLI).

Belongs to the UbiA prenyltransferase family. Mg(2+) serves as cofactor.

It is found in the cell inner membrane. The catalysed reaction is all-trans-octaprenyl diphosphate + 4-hydroxybenzoate = 4-hydroxy-3-(all-trans-octaprenyl)benzoate + diphosphate. The protein operates within cofactor biosynthesis; ubiquinone biosynthesis. Catalyzes the prenylation of para-hydroxybenzoate (PHB) with an all-trans polyprenyl group. Mediates the second step in the final reaction sequence of ubiquinone-8 (UQ-8) biosynthesis, which is the condensation of the polyisoprenoid side chain with PHB, generating the first membrane-bound Q intermediate 3-octaprenyl-4-hydroxybenzoate. The protein is 4-hydroxybenzoate octaprenyltransferase of Shewanella baltica (strain OS155 / ATCC BAA-1091).